The following is an 85-amino-acid chain: Large ribosomal subunit protein uL23 (85 aa).

The protein belongs to the universal ribosomal protein uL23 family. In terms of assembly, part of the 50S ribosomal subunit. Interacts with protein L29 and weakly with protein L39e.

In terms of biological role, binds to a specific region on the 23S rRNA. Located at the polypeptide exit tunnel on the outside of the subunit. This chain is Large ribosomal subunit protein uL23, found in Haloarcula marismortui (strain ATCC 43049 / DSM 3752 / JCM 8966 / VKM B-1809) (Halobacterium marismortui).